Reading from the N-terminus, the 345-residue chain is NADH-ubiquinone oxidoreductase chain 2 (345 aa).

10 helical membrane-spanning segments follow: residues 1–21 (MNPLINFILLSSMIAGTILTT), 26–46 (WVSAWLGLELNTLAIIPIISM), 60–80 (FLIQAASSALVLLSGIINAHL), 96–115 (IALTTALATKLGLAPIHFWL), 122–144 (VPILTALIIATWQKIAPMALLIM), 148–170 (LIPTPITLIMGLTSTIVGGLGGL), 201–223 (TLLNLILYIPMTSLTMLIMHLTM), 242–262 (SLFLLSLLSLGGLPPLSGFIP), 274–294 (NLTPMAFMMAITALLSLMFYL), and 323–343 (TSTLPLLSLISIFLLPITPTL).

This sequence belongs to the complex I subunit 2 family.

The protein localises to the mitochondrion inner membrane. It catalyses the reaction a ubiquinone + NADH + 5 H(+)(in) = a ubiquinol + NAD(+) + 4 H(+)(out). In terms of biological role, core subunit of the mitochondrial membrane respiratory chain NADH dehydrogenase (Complex I) that is believed to belong to the minimal assembly required for catalysis. Complex I functions in the transfer of electrons from NADH to the respiratory chain. The immediate electron acceptor for the enzyme is believed to be ubiquinone. The sequence is that of NADH-ubiquinone oxidoreductase chain 2 (MT-ND2) from Varanus nebulosus (Clouded monitor).